The following is a 201-amino-acid chain: Histidinol dehydrogenase (201 aa).

Belongs to the histidinol dehydrogenase family. In terms of assembly, homodimer. Zn(2+) serves as cofactor.

It catalyses the reaction L-histidinol + 2 NAD(+) + H2O = L-histidine + 2 NADH + 3 H(+). The protein operates within amino-acid biosynthesis; L-histidine biosynthesis; L-histidine from 5-phospho-alpha-D-ribose 1-diphosphate: step 9/9. Catalyzes the sequential NAD-dependent oxidations of L-histidinol to L-histidinaldehyde and then to L-histidine. The polypeptide is Histidinol dehydrogenase (hisD) (Buchnera aphidicola subsp. Melaphis rhois).